The chain runs to 489 residues: Occludin (489 aa).

Over 1 to 51 (MMYEKRSYTGYGHPSSHYDYPPPSGPPGSFYLADVPPQHFYQWRSPPGIVR) the chain is Cytoplasmic. An MARVEL domain is found at 45–248 (SPPGIVRILQ…ICYFAQKTRH (204 aa)). A helical transmembrane segment spans residues 52–74 (ILQGSVVILCLVIFACVASTLAW). The Extracellular segment spans residues 75 to 112 (EYYGSGGLLGYGGGLGSYYNGYYGGYNGYYYGGLTNPR). A helical transmembrane segment spans residues 113 to 137 (AANGFMIAMAVLCFLVTLGLVIAGL). Topologically, residues 138–147 (SKASGARSRR) are cytoplasmic. Residues 148 to 172 (FYLLVAVLSGLLAFVMLIASIVYVV) traverse the membrane as a helical segment. Residues 173-222 (GVNPRAGLGASSGSLYYNQMLMLCNQMMSPVAGGIMNQYLYHYCMVDPQE) lie on the Extracellular side of the membrane. Cys-196 and Cys-216 are joined by a disulfide. The chain crosses the membrane as a helical span at residues 223 to 244 (AVAIVCGFLTVILLCVICYFAQ). Residues 245–489 (KTRHKIWKYG…MVGGYDQSRS (245 aa)) are Cytoplasmic-facing. Ser-280 bears the Phosphoserine mark. Thr-285 is subject to Phosphothreonine. Ser-300 carries the phosphoserine modification. The segment at 308–382 (PAQENGYGHS…ESSGEQNRDD (75 aa)) is disordered. Residues 322–332 (PSVPPPEGPSP) are compositionally biased toward pro residues. Residues 345-354 (PARRGHRQRP) are compositionally biased toward basic residues. Tyr-364 and Tyr-368 each carry phosphotyrosine. Polar residues predominate over residues 365–377 (ETDYTTAAESSGE). 2 positions are modified to phosphothreonine; by PKC/PRKCH: Thr-369 and Thr-370. Position 374 is a phosphoserine (Ser-374). The OCEL domain maps to 381 to 489 (DDWASLYPPI…MVGGYDQSRS (109 aa)). Residues 407–434 (LQRYKALCAEMDDIGTQLRQLSHELDCL) are a coiled coil. Ser-457 is subject to Phosphoserine.

The protein belongs to the ELL/occludin family. As to quaternary structure, interacts with TJP1/ZO1. Interacts with VAPA. Interacts with CLDN1, CLDN6, CLDN9, CLDN11, CLDN12 and CLDN17. Interacts with PLSCR1. Interacts with LSR, ILDR1 and ILDR2. Interacts with TJP2/ZO2. Dephosphorylated by PTPRJ. In terms of tissue distribution, localized at tight junctions of both epithelial and endothelial cells.

It localises to the cell membrane. It is found in the cell junction. Its subcellular location is the tight junction. Functionally, may play a role in the formation and regulation of the tight junction (TJ) paracellular permeability barrier. This Potorous tridactylus (Potoroo) protein is Occludin (OCLN).